The primary structure comprises 149 residues: Glucosamine 6-phosphate N-acetyltransferase (149 aa).

The 143-residue stretch at 7 to 149 folds into the N-acetyltransferase domain; the sequence is YTFRKLKLTD…DGGVEMVCRF (143 aa). Residues Thr-29, 76 to 79, and 88 to 90 each bind substrate; these read KLIH and EDI. Acetyl-CoA contacts are provided by residues 90-92 and 98-103; these read ISV and GKKLGY. Substrate contacts are provided by residues 119-120 and Asp-124; that span reads YK. 133-135 contributes to the acetyl-CoA binding site; that stretch reads YEK. Residue Arg-148 coordinates substrate.

This sequence belongs to the acetyltransferase family. GNA1 subfamily.

The enzyme catalyses D-glucosamine 6-phosphate + acetyl-CoA = N-acetyl-D-glucosamine 6-phosphate + CoA + H(+). Its pathway is nucleotide-sugar biosynthesis; UDP-N-acetyl-alpha-D-glucosamine biosynthesis; N-acetyl-alpha-D-glucosamine 1-phosphate from alpha-D-glucosamine 6-phosphate (route I): step 1/2. In Candida albicans (Yeast), this protein is Glucosamine 6-phosphate N-acetyltransferase (GNA1).